The following is an 842-amino-acid chain: Protein P (842 aa).

The interval 1 to 177 (MPLSYQHFRR…FCGSPYTWEQ (177 aa)) is terminal protein domain (TP). The tract at residues 178–345 (DLQHGAFLDG…YCLSHLVNLL (168 aa)) is spacer. Residues 184–238 (FLDGPSRVGKEPFHQQSSRIPSRSPVGPSIQSKYQQSRLGLQSQKGPLARGQQGR) are disordered. Over residues 212 to 228 (SIQSKYQQSRLGLQSQK) the composition is skewed to polar residues. The tract at residues 346 to 689 (QDWGPCTEHG…YMNLYPVARQ (344 aa)) is polymerase/reverse transcriptase domain (RT). A Reverse transcriptase domain is found at 356-599 (EYHIRIPRTP…YSLNFMGYVI (244 aa)). Asp-428, Asp-550, and Asp-551 together coordinate Mg(2+).

The protein belongs to the hepadnaviridae P protein family.

It carries out the reaction DNA(n) + a 2'-deoxyribonucleoside 5'-triphosphate = DNA(n+1) + diphosphate. The enzyme catalyses Endonucleolytic cleavage to 5'-phosphomonoester.. Activated by host HSP70 and HSP40 in vitro to be able to bind the epsilon loop of the pgRNA. Because deletion of the RNase H region renders the protein partly chaperone-independent, the chaperones may be needed indirectly to relieve occlusion of the RNA-binding site by this domain. Inhibited by several reverse-transcriptase inhibitors: Lamivudine, Adefovir and Entecavir. Its function is as follows. Multifunctional enzyme that converts the viral RNA genome into dsDNA in viral cytoplasmic capsids. This enzyme displays a DNA polymerase activity that can copy either DNA or RNA templates, and a ribonuclease H (RNase H) activity that cleaves the RNA strand of RNA-DNA heteroduplexes in a partially processive 3'- to 5'-endonucleasic mode. Neo-synthesized pregenomic RNA (pgRNA) are encapsidated together with the P protein, and reverse-transcribed inside the nucleocapsid. Initiation of reverse-transcription occurs first by binding the epsilon loop on the pgRNA genome, and is initiated by protein priming, thereby the 5'-end of (-)DNA is covalently linked to P protein. Partial (+)DNA is synthesized from the (-)DNA template and generates the relaxed circular DNA (RC-DNA) genome. After budding and infection, the RC-DNA migrates in the nucleus, and is converted into a plasmid-like covalently closed circular DNA (cccDNA). The activity of P protein does not seem to be necessary for cccDNA generation, and is presumably released from (+)DNA by host nuclear DNA repair machinery. The polypeptide is Protein P (Hepatitis B virus genotype G (isolate United States/USG17/2002) (HBV-G)).